An 884-amino-acid chain; its full sequence is Alanine--tRNA ligase (884 aa).

Zn(2+) contacts are provided by histidine 572, histidine 576, cysteine 673, and histidine 677.

Belongs to the class-II aminoacyl-tRNA synthetase family. Zn(2+) is required as a cofactor.

Its subcellular location is the cytoplasm. It carries out the reaction tRNA(Ala) + L-alanine + ATP = L-alanyl-tRNA(Ala) + AMP + diphosphate. Functionally, catalyzes the attachment of alanine to tRNA(Ala) in a two-step reaction: alanine is first activated by ATP to form Ala-AMP and then transferred to the acceptor end of tRNA(Ala). Also edits incorrectly charged Ser-tRNA(Ala) and Gly-tRNA(Ala) via its editing domain. The polypeptide is Alanine--tRNA ligase (Xylella fastidiosa (strain M23)).